The primary structure comprises 76 residues: MPKADIHPEWYPDAKVICNGEVVMTIGSTQPEINVEIWSGNHPFYTGTQKIIDTEGRVDRFLRKYGMLSNNSDDQK.

Belongs to the bacterial ribosomal protein bL31 family. Type A subfamily. Part of the 50S ribosomal subunit.

In terms of biological role, binds the 23S rRNA. The polypeptide is Large ribosomal subunit protein bL31 (Picosynechococcus sp. (strain ATCC 27264 / PCC 7002 / PR-6) (Agmenellum quadruplicatum)).